A 442-amino-acid polypeptide reads, in one-letter code: Histidinol dehydrogenase (442 aa).

Tyr-138, Gln-199, and Asn-222 together coordinate NAD(+). Positions 245, 267, and 270 each coordinate substrate. 2 residues coordinate Zn(2+): Gln-267 and His-270. Residues Glu-335 and His-336 each act as proton acceptor in the active site. Substrate is bound by residues His-336, Asp-369, Glu-423, and His-428. Residue Asp-369 participates in Zn(2+) binding. Residue His-428 participates in Zn(2+) binding.

This sequence belongs to the histidinol dehydrogenase family. It depends on Zn(2+) as a cofactor.

It carries out the reaction L-histidinol + 2 NAD(+) + H2O = L-histidine + 2 NADH + 3 H(+). It participates in amino-acid biosynthesis; L-histidine biosynthesis; L-histidine from 5-phospho-alpha-D-ribose 1-diphosphate: step 9/9. Functionally, catalyzes the sequential NAD-dependent oxidations of L-histidinol to L-histidinaldehyde and then to L-histidine. The polypeptide is Histidinol dehydrogenase (Ralstonia nicotianae (strain ATCC BAA-1114 / GMI1000) (Ralstonia solanacearum)).